The primary structure comprises 943 residues: Isoleucine--tRNA ligase (943 aa).

Positions 58–68 match the 'HIGH' region motif; that stretch reads PYANGSIHIGH. E567 serves as a coordination point for L-isoleucyl-5'-AMP. Residues 608–612 carry the 'KMSKS' region motif; that stretch reads KMSKS. An ATP-binding site is contributed by K611. Zn(2+)-binding residues include C906, C909, C926, and C929.

Belongs to the class-I aminoacyl-tRNA synthetase family. IleS type 1 subfamily. As to quaternary structure, monomer. It depends on Zn(2+) as a cofactor.

The protein localises to the cytoplasm. It carries out the reaction tRNA(Ile) + L-isoleucine + ATP = L-isoleucyl-tRNA(Ile) + AMP + diphosphate. In terms of biological role, catalyzes the attachment of isoleucine to tRNA(Ile). As IleRS can inadvertently accommodate and process structurally similar amino acids such as valine, to avoid such errors it has two additional distinct tRNA(Ile)-dependent editing activities. One activity is designated as 'pretransfer' editing and involves the hydrolysis of activated Val-AMP. The other activity is designated 'posttransfer' editing and involves deacylation of mischarged Val-tRNA(Ile). This chain is Isoleucine--tRNA ligase, found in Pseudomonas fluorescens (strain ATCC BAA-477 / NRRL B-23932 / Pf-5).